The sequence spans 431 residues: Histidine--tRNA ligase (431 aa).

The protein belongs to the class-II aminoacyl-tRNA synthetase family. In terms of assembly, homodimer.

The protein localises to the cytoplasm. It catalyses the reaction tRNA(His) + L-histidine + ATP = L-histidyl-tRNA(His) + AMP + diphosphate + H(+). In Neisseria meningitidis serogroup A / serotype 4A (strain DSM 15465 / Z2491), this protein is Histidine--tRNA ligase.